We begin with the raw amino-acid sequence, 944 residues long: Protein translocase subunit SecA (944 aa).

ATP contacts are provided by residues Gln77, 95-99, and Asp484; that span reads GEGKT. Residues 920 to 944 form a disordered region; sequence EQEKQTRKKKKKKPHEDESSKTKIG. Basic and acidic residues predominate over residues 933-944; that stretch reads PHEDESSKTKIG.

It belongs to the SecA family. In terms of assembly, monomer and homodimer. Part of the essential Sec protein translocation apparatus which comprises SecA, SecYEG and auxiliary proteins SecDF. Other proteins may also be involved.

Its subcellular location is the cell membrane. It is found in the cytoplasm. The catalysed reaction is ATP + H2O + cellular proteinSide 1 = ADP + phosphate + cellular proteinSide 2.. Part of the Sec protein translocase complex. Interacts with the SecYEG preprotein conducting channel. Has a central role in coupling the hydrolysis of ATP to the transfer of proteins into and across the cell membrane, serving as an ATP-driven molecular motor driving the stepwise translocation of polypeptide chains across the membrane. The protein is Protein translocase subunit SecA of Mycoplasma mycoides subsp. mycoides SC (strain CCUG 32753 / NCTC 10114 / PG1).